Consider the following 677-residue polypeptide: Methionine--tRNA ligase (677 aa).

The 'HIGH' region signature appears at 15–25 (PYANGSIHLGH). 4 residues coordinate Zn(2+): cysteine 146, cysteine 149, cysteine 159, and cysteine 162. The 'KMSKS' region motif lies at 333-337 (KMSKS). Lysine 336 serves as a coordination point for ATP. In terms of domain architecture, tRNA-binding spans 575-677 (DFAKVDLRVA…AGAKPGHQVK (103 aa)).

This sequence belongs to the class-I aminoacyl-tRNA synthetase family. MetG type 1 subfamily. As to quaternary structure, homodimer. Zn(2+) is required as a cofactor.

It localises to the cytoplasm. It carries out the reaction tRNA(Met) + L-methionine + ATP = L-methionyl-tRNA(Met) + AMP + diphosphate. Its function is as follows. Is required not only for elongation of protein synthesis but also for the initiation of all mRNA translation through initiator tRNA(fMet) aminoacylation. The protein is Methionine--tRNA ligase of Escherichia coli O6:K15:H31 (strain 536 / UPEC).